The following is a 427-amino-acid chain: Peptidase B (427 aa).

Residues Lys195 and Asp200 each contribute to the Mn(2+) site. The active site involves Lys207. Residues Asp218, Asp277, and Glu279 each coordinate Mn(2+). Arg281 is an active-site residue.

Belongs to the peptidase M17 family. Homohexamer. Mn(2+) serves as cofactor.

The protein localises to the cytoplasm. It carries out the reaction Release of an N-terminal amino acid, Xaa, from a peptide or arylamide. Xaa is preferably Glu or Asp but may be other amino acids, including Leu, Met, His, Cys and Gln.. In terms of biological role, probably plays an important role in intracellular peptide degradation. This chain is Peptidase B, found in Salmonella agona (strain SL483).